The chain runs to 304 residues: Galactose 1-dehydrogenase (304 aa).

It belongs to the Gfo/Idh/MocA family. Homodimer.

The protein resides in the cytoplasm. The catalysed reaction is D-galactose + NAD(+) = D-galactono-1,4-lactone + NADH + H(+). The protein operates within carbohydrate metabolism; galactose metabolism. Functionally, catalyzes the dehydrogenation of D-galactose by either NAD(+) or NADP(+). Oxidizes following sugars in decreasing order: D-fucose &gt; D-galactose &gt; L-arabinose &gt; 2-deoxy-D-galactose &gt;&gt; 4-deoxy-D-galactose &gt; 2-deoxy-2-amino-D-galactose. The protein is Galactose 1-dehydrogenase (gal) of Pseudomonas fluorescens.